Reading from the N-terminus, the 152-residue chain is MSLSQKEIIERVRAIAEPIVTSMGLELFDVKYRIQAGKWVLSIIIDKLDDYVSTRDCELVSYEIEKVLDSHDFIPGRYYLEVSSPGLDRPLKKIEDFRRFVGKLVKVKTKKTYRGYIVDVNMETKEIILRVDNENITIKYDDVKSANLEIEL.

Belongs to the RimP family.

The protein resides in the cytoplasm. In terms of biological role, required for maturation of 30S ribosomal subunits. The sequence is that of Ribosome maturation factor RimP from Fervidobacterium nodosum (strain ATCC 35602 / DSM 5306 / Rt17-B1).